The sequence spans 278 residues: 4-deoxy-L-threo-5-hexosulose-uronate ketol-isomerase (278 aa).

Residues His-196, His-198, Glu-203, and His-245 each contribute to the Zn(2+) site.

It belongs to the KduI family. The cofactor is Zn(2+).

It carries out the reaction 5-dehydro-4-deoxy-D-glucuronate = 3-deoxy-D-glycero-2,5-hexodiulosonate. Its pathway is glycan metabolism; pectin degradation; 2-dehydro-3-deoxy-D-gluconate from pectin: step 4/5. Its function is as follows. Catalyzes the isomerization of 5-dehydro-4-deoxy-D-glucuronate to 3-deoxy-D-glycero-2,5-hexodiulosonate. The protein is 4-deoxy-L-threo-5-hexosulose-uronate ketol-isomerase of Edwardsiella ictaluri (strain 93-146).